Consider the following 220-residue polypeptide: ATP synthase subunit 5, mitochondrial (220 aa).

This sequence belongs to the ATPase delta chain family. As to quaternary structure, F-type ATPases have 2 components, CF(1) - the catalytic core - and CF(0) - the membrane proton channel. CF(1) has five subunits: alpha(3), beta(3), gamma(1), delta(1), epsilon(1). CF(0) has three main subunits: a, b and c.

The protein localises to the mitochondrion. Its subcellular location is the mitochondrion inner membrane. Its function is as follows. Mitochondrial membrane ATP synthase (F(1)F(0) ATP synthase or Complex V) produces ATP from ADP in the presence of a proton gradient across the membrane which is generated by electron transport complexes of the respiratory chain. F-type ATPases consist of two structural domains, F(1) - containing the extramembraneous catalytic core and F(0) - containing the membrane proton channel, linked together by a central stalk and a peripheral stalk. During catalysis, ATP synthesis in the catalytic domain of F(1) is coupled via a rotary mechanism of the central stalk subunits to proton translocation. Part of the complex F(0) domain and the peripheric stalk, which acts as a stator to hold the catalytic alpha(3)beta(3) subcomplex and subunit a/ATP6 static relative to the rotary elements. The protein is ATP synthase subunit 5, mitochondrial (atp-5) of Neurospora crassa (strain ATCC 24698 / 74-OR23-1A / CBS 708.71 / DSM 1257 / FGSC 987).